Reading from the N-terminus, the 49-residue chain is Large ribosomal subunit protein bL33B (49 aa).

This sequence belongs to the bacterial ribosomal protein bL33 family.

The polypeptide is Large ribosomal subunit protein bL33B (Bacillus pumilus (strain SAFR-032)).